The primary structure comprises 95 residues: Large ribosomal subunit protein bL25 (95 aa).

It belongs to the bacterial ribosomal protein bL25 family. As to quaternary structure, part of the 50S ribosomal subunit; part of the 5S rRNA/L5/L18/L25 subcomplex. Contacts the 5S rRNA. Binds to the 5S rRNA independently of L5 and L18.

This is one of the proteins that binds to the 5S RNA in the ribosome where it forms part of the central protuberance. The polypeptide is Large ribosomal subunit protein bL25 (Chromobacterium violaceum (strain ATCC 12472 / DSM 30191 / JCM 1249 / CCUG 213 / NBRC 12614 / NCIMB 9131 / NCTC 9757 / MK)).